The sequence spans 299 residues: Acetylglutamate kinase (299 aa).

Substrate contacts are provided by residues 70 to 71 (GG), R92, and N186.

It belongs to the acetylglutamate kinase family. ArgB subfamily.

The protein resides in the cytoplasm. It carries out the reaction N-acetyl-L-glutamate + ATP = N-acetyl-L-glutamyl 5-phosphate + ADP. It functions in the pathway amino-acid biosynthesis; L-arginine biosynthesis; N(2)-acetyl-L-ornithine from L-glutamate: step 2/4. Catalyzes the ATP-dependent phosphorylation of N-acetyl-L-glutamate. This chain is Acetylglutamate kinase, found in Thermoanaerobacter pseudethanolicus (strain ATCC 33223 / 39E) (Clostridium thermohydrosulfuricum).